The primary structure comprises 622 residues: Low affinity potassium transport system protein Kup (622 aa).

12 consecutive transmembrane segments (helical) span residues 9–29, 49–69, 103–123, 137–157, 165–185, 213–233, 247–267, 276–296, 337–357, 363–383, 396–416, and 419–439; these read LPAI…TSPL, VFGF…IKYL, VIMG…TPAI, PQLD…LFMI, VGKL…GLGL, VSFI…ALYA, WFTV…ALLL, PFFL…AALA, IYIP…IVSF, LAAA…ILST, FVAL…TANL, and LLSG…VMTT.

It belongs to the HAK/KUP transporter (TC 2.A.72) family.

The protein localises to the cell inner membrane. It carries out the reaction K(+)(in) + H(+)(in) = K(+)(out) + H(+)(out). Responsible for the low-affinity transport of potassium into the cell. Likely operates as a K(+):H(+) symporter. This Escherichia fergusonii (strain ATCC 35469 / DSM 13698 / CCUG 18766 / IAM 14443 / JCM 21226 / LMG 7866 / NBRC 102419 / NCTC 12128 / CDC 0568-73) protein is Low affinity potassium transport system protein Kup.